A 37-amino-acid chain; its full sequence is Large ribosomal subunit protein bL36 (37 aa).

The protein belongs to the bacterial ribosomal protein bL36 family.

In Prochlorococcus marinus (strain MIT 9313), this protein is Large ribosomal subunit protein bL36.